Reading from the N-terminus, the 136-residue chain is Transcription antitermination protein NusB (136 aa).

Belongs to the NusB family.

Involved in transcription antitermination. Required for transcription of ribosomal RNA (rRNA) genes. Binds specifically to the boxA antiterminator sequence of the ribosomal RNA (rrn) operons. In Treponema denticola (strain ATCC 35405 / DSM 14222 / CIP 103919 / JCM 8153 / KCTC 15104), this protein is Transcription antitermination protein NusB.